The primary structure comprises 425 residues: CinA-like protein (425 aa).

The protein belongs to the CinA family.

The protein is CinA-like protein of Desulfovibrio desulfuricans (strain ATCC 27774 / DSM 6949 / MB).